A 629-amino-acid polypeptide reads, in one-letter code: tRNA uridine 5-carboxymethylaminomethyl modification enzyme MnmG (629 aa).

Residues 13-18 (GGGHAG), V125, and S180 each bind FAD. An NAD(+)-binding site is contributed by 273–287 (GPRYCPSIEDKVMRF). Q370 serves as a coordination point for FAD.

It belongs to the MnmG family. As to quaternary structure, homodimer. Heterotetramer of two MnmE and two MnmG subunits. FAD is required as a cofactor.

Its subcellular location is the cytoplasm. NAD-binding protein involved in the addition of a carboxymethylaminomethyl (cmnm) group at the wobble position (U34) of certain tRNAs, forming tRNA-cmnm(5)s(2)U34. In Salmonella choleraesuis (strain SC-B67), this protein is tRNA uridine 5-carboxymethylaminomethyl modification enzyme MnmG.